Here is a 450-residue protein sequence, read N- to C-terminus: Nuclear hormone receptor family member nhr-40 (450 aa).

Positions 28 to 103 form a DNA-binding region, nuclear receptor; that stretch reads GTLCVVCSDF…MGMDPKAIQH (76 aa). 2 consecutive NR C4-type zinc fingers follow at residues 31–51 and 67–91; these read CVVCSDFASGIHYSVASCNGC and CQFSGDCVVGKSVRCVCRSCRLKKC. The region spanning 173–450 is the NR LBD domain; sequence DVKAVIEDLL…LIDQLIIVGL (278 aa).

This sequence belongs to the nuclear hormone receptor family. As to expression, isoform b: Expressed in body wall muscle cells, pharyngeal muscles, rectal gland cells, vulval and uterine muscles and neurons in the head and ventral nerve cord. Isoform c: Expressed in body wall muscle cells, neurons in the head, nerve ring, ventral and dorsal nerve cords and epidermal cells in the tail.

It localises to the nucleus. Its function is as follows. Orphan nuclear receptor. Plays a role in morphogenesis and elongation during embryonic and larval development. Plays a role in muscle formation and motility. In Caenorhabditis elegans, this protein is Nuclear hormone receptor family member nhr-40.